Consider the following 222-residue polypeptide: Glycerol-3-phosphate acyltransferase (222 aa).

Helical transmembrane passes span 4–24, 56–76, 87–107, 130–150, 153–173, and 174–191; these read ALLL…IPTG, PAAI…VALV, ALPA…VVLG, FMLN…VIFF, IVSL…LALQ, and LPPP…YVIV.

Belongs to the PlsY family. In terms of assembly, probably interacts with PlsX.

Its subcellular location is the cell inner membrane. It catalyses the reaction an acyl phosphate + sn-glycerol 3-phosphate = a 1-acyl-sn-glycero-3-phosphate + phosphate. It functions in the pathway lipid metabolism; phospholipid metabolism. Its function is as follows. Catalyzes the transfer of an acyl group from acyl-phosphate (acyl-PO(4)) to glycerol-3-phosphate (G3P) to form lysophosphatidic acid (LPA). This enzyme utilizes acyl-phosphate as fatty acyl donor, but not acyl-CoA or acyl-ACP. The chain is Glycerol-3-phosphate acyltransferase from Synechocystis sp. (strain ATCC 27184 / PCC 6803 / Kazusa).